The following is a 379-amino-acid chain: Cytochrome b (379 aa).

A run of 4 helical transmembrane segments spans residues 33–53 (FGSL…FLAM), 77–98 (WLIR…FIHV), 113–133 (WNIG…GYVL), and 178–198 (FFAF…VHLL). Heme b is bound by residues His-83 and His-97. Heme b-binding residues include His-182 and His-196. His-201 provides a ligand contact to a ubiquinone. Helical transmembrane passes span 226 to 246 (IKDL…ALFF), 288 to 308 (LGGV…PLLN), 320 to 340 (ITQT…WIGG), and 347 to 367 (FTMI…ILXP).

It belongs to the cytochrome b family. As to quaternary structure, the cytochrome bc1 complex contains 11 subunits: 3 respiratory subunits (MT-CYB, CYC1 and UQCRFS1), 2 core proteins (UQCRC1 and UQCRC2) and 6 low-molecular weight proteins (UQCRH/QCR6, UQCRB/QCR7, UQCRQ/QCR8, UQCR10/QCR9, UQCR11/QCR10 and a cleavage product of UQCRFS1). This cytochrome bc1 complex then forms a dimer. Heme b is required as a cofactor.

The protein localises to the mitochondrion inner membrane. In terms of biological role, component of the ubiquinol-cytochrome c reductase complex (complex III or cytochrome b-c1 complex) that is part of the mitochondrial respiratory chain. The b-c1 complex mediates electron transfer from ubiquinol to cytochrome c. Contributes to the generation of a proton gradient across the mitochondrial membrane that is then used for ATP synthesis. In Akodon toba (Chaco grass mouse), this protein is Cytochrome b (MT-CYB).